The chain runs to 1151 residues: MEKPNYFQSYNKVIGATGEQLAPGAVPPHPVLAPSIAPGGVAGVSAANMANIMQTPGFANLVQQAIRTQLENQAAQQLAVNQQFQLNGATAVQQQLLLTPQQSLAQPIALAPQPTVVLNGVSETLKKVTELAHRQFQSGNYVEAEKYCNLVFQSDPNNLPTLLLLSAINFQTKNLEKSMQYSMLAIKVNNQCAEAYSNLGNYYKEKGQLQDALENYKLAVKLKPEFIDAYINLAAALVSGGDLEQAVTAYFNALQINPDLYCVRSDLGNLLKAMGRLEEAKVCYLKAIETQPQFAVAWSNLGCVFNSQGEIWLAIHHFEKAVTLDPNFLDAYINLGNVLKEARIFDRAVSAYLRALNLSGNHAVVHGNLACVYYEQGLIDLAIDTYKKAIDLQPHFPDAYCNLANALKEKGSVVEAEQMYMKALELCPTHADSQNNLANIKREQGKIEDATRLYLKALEIYPEFAAAHSNLASILQQQGKLNDAILHYKEAIRIAPTFADAYSNMGNTLKEMGDSSAAIACYNRAIQINPAFADAHSNLASIHKDAGNMAEAIQSYSTALKLKPDFPDAYCNLAHCHQIICDWNDYDKRVRKLVQIVEDQLCKKRLPSVHPHHSMLYPLSHAARIAIAAKHASLCFDKVHVQMLGKTPLIHADRFSVQNGQRLRIGYVSSDFGNHPTSHLMQSIPGMHDRSRVEVFCYALSVNDGTNFRSKLMNESEHFVDLSQIPCNGKAAEKIAQDGIHILINMNGYTKGARNEIFALRPAPIQVMWLGYPSTSGATFMDYIITDAVTSPLRLANAFTEKLAYMPHTFFIGDHAQMLRHLTDKVVVKDKETTERDSCLIMNTANMDPILAKSEIKEQVLDTEVVSGPNKELVRAEMVLPVLEVPTEPIKQMIMTGQMTMNVMEDMNVQNGLGQSQMHHKAATGEEIPNSVLLTSRAQYQLPDDAIVFCNFNQLYKIDPSTLDMWIKILENVPKSILWLLRFPYQGEEHIRKYCVERGLDPSRIVFSNVAAKEEHVRRGQLADVCLDTPLCNGHTTGMDILWTGTPMVTMPLESLASRVATSQLYALGVPELVAKTRQEYVSIAVRLGTDADHLANMRAKVWMARTSSTLFDVKQYCHDMEDLLGQMWKRYESGMPIDHITNNTETPHGL.

TPR repeat units follow at residues 125–158 (LKKVTELAHRQFQSGNYVEAEKYCNLVFQSDPNN), 193–226 (AEAYSNLGNYYKEKGQLQDALENYKLAVKLKPEF), 227–260 (IDAYINLAAALVSGGDLEQAVTAYFNALQINPDL), 261–294 (YCVRSDLGNLLKAMGRLEEAKVCYLKAIETQPQF), 295–328 (AVAWSNLGCVFNSQGEIWLAIHHFEKAVTLDPNF), 329–362 (LDAYINLGNVLKEARIFDRAVSAYLRALNLSGNH), 363–396 (AVVHGNLACVYYEQGLIDLAIDTYKKAIDLQPHF), 397–430 (PDAYCNLANALKEKGSVVEAEQMYMKALELCPTH), 431–464 (ADSQNNLANIKREQGKIEDATRLYLKALEIYPEF), 465–498 (AAAHSNLASILQQQGKLNDAILHYKEAIRIAPTF), 499–532 (ADAYSNMGNTLKEMGDSSAAIACYNRAIQINPAF), and 533–566 (ADAHSNLASIHKDAGNMAEAIQSYSTALKLKPDF). The stretch at 567 to 577 (PDAYCNLAHCH) is one TPR 13; truncated repeat. A Nuclear localization signal motif is present at residues 591–607 (RKLVQIVEDQLCKKRLP). The active-site Proton acceptor is H612. UDP contacts are provided by residues Q954, K957, 1010 to 1013 (VAAK), 1016 to 1019 (HVRR), 1034 to 1036 (GHT), and D1040.

Belongs to the glycosyltransferase 41 family. O-GlcNAc transferase subfamily.

Its subcellular location is the nucleus. The protein localises to the cytoplasm. It is found in the perinuclear region. It catalyses the reaction L-seryl-[protein] + UDP-N-acetyl-alpha-D-glucosamine = 3-O-(N-acetyl-beta-D-glucosaminyl)-L-seryl-[protein] + UDP + H(+). It carries out the reaction L-threonyl-[protein] + UDP-N-acetyl-alpha-D-glucosamine = 3-O-(N-acetyl-beta-D-glucosaminyl)-L-threonyl-[protein] + UDP + H(+). Its pathway is protein modification; protein glycosylation. Functionally, addition of nucleotide-activated sugars directly onto the polypeptide through O-glycosidic linkage with the hydroxyl of serine or threonine. Influences tap habituation in the mechanosensory neurons cell autonomously. The polypeptide is UDP-N-acetylglucosamine--peptide N-acetylglucosaminyltransferase (ogt-1) (Caenorhabditis elegans).